Reading from the N-terminus, the 532-residue chain is Telomerase Cajal body protein 1 (532 aa).

The tract at residues 1–53 is disordered; it reads MKTSEERLLAPDSLPPDLAPAPVPQGSPAEKNTDFEPVPPPCGGDDQPQLATD. Residues 13–25 are compositionally biased toward pro residues; the sequence is SLPPDLAPAPVPQ. Residues S27, S61, and S83 each carry the phosphoserine modification. A disordered region spans residues 80–122; the sequence is SELSPGIEEQDVSEHASLPGEETNLPELESGEATEGVSEERAE. 6 WD repeats span residues 151-190, 206-251, 256-297, 307-348, 349-389, and 395-434; these read RSEN…YSEQ, EGDT…LRAS, NHLD…RDCE, GQSG…ALLG, GHQG…HLLW, and VTTN…SDDS. T474 is modified (phosphothreonine). Residue S476 is modified to Phosphoserine. Residues 510 to 532 form a disordered region; that stretch reads DPSSPVDDQDEKGQRRTEAVGMS. Over residues 520–532 the composition is skewed to basic and acidic residues; the sequence is EKGQRRTEAVGMS.

It belongs to the TCAB1 family. In terms of assembly, component of the telomerase holoenzyme complex composed of one molecule of TERT, one molecule of WRAP53/TCAB1, two molecules of H/ACA ribonucleoprotein complex subunits DKC1, NOP10, NHP2 and GAR1, and a telomerase RNA template component (TERC). The telomerase holoenzyme complex is associated with TEP1, SMG6/EST1A and POT1. Interacts with the chaperonin-containing T-complex (TRiC) complex; which mediates the folding of WRAP53/TCAB1. Interacts with COIL. Interacts with SMN1. Interacts with RNF8. Interacts with histone H2AX. Post-translationally, phosphorylated at Ser-61 by ATM in response to DNA damage, promoting its interaction with histone H2AX and localization to sites of DNA double-strand breaks.

Its subcellular location is the nucleus. It is found in the cajal body. It localises to the chromosome. The protein resides in the telomere. Its function is as follows. RNA chaperone that plays a key role in telomere maintenance and RNA localization to Cajal bodies. Specifically recognizes and binds the Cajal body box (CAB box) present in both small Cajal body RNAs (scaRNAs) and telomerase RNA template component (TERC). Essential component of the telomerase holoenzyme complex, a ribonucleoprotein complex essential for the replication of chromosome termini that elongates telomeres in most eukaryotes. In the telomerase holoenzyme complex, required to stimulate the catalytic activity of the complex. Acts by specifically binding the CAB box of the TERC RNA and controlling the folding of the CR4/CR5 region of the TERC RNA, a critical step for telomerase activity. In addition, also controls telomerase holoenzyme complex localization to Cajal body. During S phase, required for delivery of TERC to telomeres during S phase and for telomerase activity. In addition to its role in telomere maintenance, also required for Cajal body formation, probably by mediating localization of scaRNAs to Cajal bodies. Also plays a role in DNA repair: phosphorylated by ATM in response to DNA damage and relocalizes to sites of DNA double-strand breaks to promote the repair of DNA double-strand breaks. Acts by recruiting the ubiquitin ligase RNF8 to DNA breaks and promote both homologous recombination (HR) and non-homologous end joining (NHEJ). The protein is Telomerase Cajal body protein 1 of Mus musculus (Mouse).